The primary structure comprises 185 residues: Avirulence protein ATR39-1 (185 aa).

A signal peptide spans 1-20 (MVKCTPLLALTVIVSAGSDA). A RxLR-dEER motif is present at residues 49–66 (RVLRASDVPDEVAAGESR).

Belongs to the RxLR effector family.

The protein localises to the secreted. It localises to the host cell. In terms of biological role, secreted effector that acts as an elicitor of hypersensitive response (HR) specifically on plants carrying defense protein RPP39. The allele ATR39-1 is recognized by RPP39, whereas the ATR39-2 allele is not recognized. The protein is Avirulence protein ATR39-1 of Hyaloperonospora arabidopsidis (strain Emoy2) (Downy mildew agent).